The chain runs to 843 residues: Tetratricopeptide repeat protein 7B (843 aa).

The stretch at 97 to 131 is one TPR 1 repeat; the sequence is QESNLIMAKLNYVEGDYKEALNIYARVGLDDLPLT. Residues serine 160 and serine 202 each carry the phosphoserine modification. 6 TPR repeats span residues 219–252, 363–396, 397–430, 479–514, 516–548, and 549–582; these read ETGLQRAHVLYFKNGNLTRGVGRFRELLRAVETR, SVVYDLLTIALGRRGQYEMLSECLERAMKFAFEE, FHLWYQFALSLMAAGKSARAVKVLKECIRLKPDD, TYSLQATDASLRGMQEVLQRKALLAFQRAHSLSPTD, QAAFYLALQLAISRQIPEALGYVRQALQLQGDD, and ANSLHLLALLLSAQKHYHDALNIIDMALSEYPEN. Phosphoserine is present on residues serine 625, serine 629, serine 630, serine 673, serine 677, serine 678, and serine 681. 4 TPR repeats span residues 696–729, 730–763, 765–797, and 798–831; these read AQIWLHAAEVYIGIGKPAEATACTQEAANLFPMS, HNVLYMRGQIAELRGSMDEARRWYEEALAISPTH, KSMQRLALILHQLGRYSLAEKILRDAVQVNSTA, and HEVWNGLGEVLQAQGNDAAATECFLTALELEASS.

As to quaternary structure, component of a phosphatidylinositol 4-kinase (PI4K) complex, composed of PI4KA, EFR3 (EFR3A or EFR3B), TTC7 (TTC7A or TTC7B) and HYCC (HYCC1 or HYCC2). Interacts with PI4KA, interaction is direct. Interacts with EFR3 (EFR3A or EFR3B), interaction is direct. Interacts with HYCC (HYCC1 or HYCC2), interaction is direct. Association with the PI4K complex is strongly reduced by TMEM150A.

The protein resides in the cytoplasm. The protein localises to the cytosol. It is found in the cell membrane. In terms of biological role, component of a complex required to localize phosphatidylinositol 4-kinase (PI4K) to the plasma membrane. The complex acts as a regulator of phosphatidylinositol 4-phosphate (PtdIns(4)P) synthesis. In the complex, plays a central role in bridging PI4KA to EFR3B and HYCC1, via direct interactions. The protein is Tetratricopeptide repeat protein 7B (TTC7B) of Homo sapiens (Human).